Reading from the N-terminus, the 163-residue chain is Epithelial membrane protein 3 (163 aa).

Residues 4 to 24 form a helical membrane-spanning segment; the sequence is LLLVVSALHILILILLFVATL. N-linked (GlcNAc...) asparagine glycans are attached at residues asparagine 49 and asparagine 56. Transmembrane regions (helical) follow at residues 66 to 86, 100 to 120, and 139 to 159; these read VQVLMVLSLILCCLSFILFMF, TGFCQLCTSVAVFTGALIYAI, and FALAWVAFPLALASGIIYIHL.

Belongs to the PMP-22/EMP/MP20 family.

The protein resides in the membrane. Its function is as follows. Probably involved in cell proliferation and cell-cell interactions. The polypeptide is Epithelial membrane protein 3 (EMP3) (Bos taurus (Bovine)).